Consider the following 123-residue polypeptide: Protein Wnt-3a (123 aa).

S1 carries O-palmitoleoyl serine lipidation. A disulfide bond links C89 and C104. N90 carries an N-linked (GlcNAc...) asparagine glycan.

Belongs to the Wnt family. Disulfide bonds have critical and distinct roles in secretion and activity. Loss of each conserved cysteine results in high molecular weight oxidized Wnt oligomers, which are formed through inter-Wnt disulfide bonding. In terms of processing, palmitoleoylation is required for efficient binding to frizzled receptors. Depalmitoleoylation leads to Wnt signaling pathway inhibition.

Its subcellular location is the secreted. It is found in the extracellular space. The protein localises to the extracellular matrix. In terms of biological role, ligand for members of the frizzled family of seven transmembrane receptors. Functions in the canonical Wnt signaling pathway that results in activation of transcription factors of the TCF/LEF family. Required for normal embryonic mesoderm development and formation of caudal somites. Required for normal morphogenesis of the developing neural tube. In Meleagris gallopavo (Wild turkey), this protein is Protein Wnt-3a (WNT3A).